We begin with the raw amino-acid sequence, 236 residues long: Ribonuclease HII (236 aa).

The RNase H type-2 domain maps to 27 to 219 (RILCGVDEAG…VRRALDGAPP (193 aa)). A divalent metal cation is bound by residues Asp33, Glu34, and Asp128. The segment at 212-236 (RALDGAPPPAGDAVPQTDAKTAWAD) is disordered.

The protein belongs to the RNase HII family. Mn(2+) is required as a cofactor. Mg(2+) serves as cofactor.

The protein resides in the cytoplasm. It carries out the reaction Endonucleolytic cleavage to 5'-phosphomonoester.. Its function is as follows. Endonuclease that specifically degrades the RNA of RNA-DNA hybrids. The protein is Ribonuclease HII of Ralstonia nicotianae (strain ATCC BAA-1114 / GMI1000) (Ralstonia solanacearum).